We begin with the raw amino-acid sequence, 418 residues long: Tyrosine--tRNA ligase (418 aa).

Position 34 (Y34) interacts with L-tyrosine. A 'HIGH' region motif is present at residues 39 to 48 (PTADSLHLGH). L-tyrosine is bound by residues Y169 and Q173. A 'KMSKS' region motif is present at residues 229-233 (KFGKS). ATP is bound at residue K232. An S4 RNA-binding domain is found at 352–418 (LNLVDMLVTA…GKKKYAVLTY (67 aa)).

The protein belongs to the class-I aminoacyl-tRNA synthetase family. TyrS type 1 subfamily. In terms of assembly, homodimer.

It localises to the cytoplasm. The catalysed reaction is tRNA(Tyr) + L-tyrosine + ATP = L-tyrosyl-tRNA(Tyr) + AMP + diphosphate + H(+). In terms of biological role, catalyzes the attachment of tyrosine to tRNA(Tyr) in a two-step reaction: tyrosine is first activated by ATP to form Tyr-AMP and then transferred to the acceptor end of tRNA(Tyr). The protein is Tyrosine--tRNA ligase of Streptococcus pyogenes serotype M18 (strain MGAS8232).